A 62-amino-acid polypeptide reads, in one-letter code: Calmodulin regulator protein PCP4 (62 aa).

Positions 1–40 (MSERQGAGTTNGKDKPSGENDGQKKVQEEFDIDMDAPETE) are disordered. Residues 12–28 (GKDKPSGENDGQKKVQE) are compositionally biased toward basic and acidic residues. The segment at 28-40 (EEFDIDMDAPETE) is acidic; binds calcium and is required for modulating the calcium-binding kinetics of calmodulin. The 24-residue stretch at 39–62 (TERAAVAIQSQFRKFQKKKAGSQS) folds into the IQ domain.

The protein belongs to the PCP4 family. As to quaternary structure, binds to both calcium-free and calcium-bound calmodulin. The affinity for the calcium-bound form is 50-fold greater.

Functionally, functions as a modulator of calcium-binding by calmodulin. Thereby, regulates calmodulin activity and the different processes it controls. For instance, may play a role in neuronal differentiation through activation of calmodulin-dependent kinase signaling pathways. This is Calmodulin regulator protein PCP4 from Bos taurus (Bovine).